The following is a 456-amino-acid chain: D-glycerate 3-kinase, chloroplastic (456 aa).

Residues 1 to 63 (MAVAISGSSL…KFNDHVVNPS (63 aa)) constitute a chloroplast transit peptide. Position 215–222 (215–222 (APQGCGKT)) interacts with ATP.

The protein belongs to the GLYK kinase family.

Its subcellular location is the plastid. It is found in the chloroplast. It localises to the cytoplasm. It catalyses the reaction (R)-glycerate + ATP = (2R)-3-phosphoglycerate + ADP + H(+). Its pathway is photosynthesis; photorespiration; 3-phospho-D-glycerate from glycine: step 4/4. Catalyzes the concluding reaction of the photorespiratory C2 cycle, an indispensable ancillary metabolic pathway to the photosynthetic C3 cycle that enables land plants to grow in an oxygen-containing atmosphere. Functionally, cytoplasmic D-glycerate 3-kinase that constitutes a photorespiratory bypass that alleviates fluctuating light-induced photoinhibition. In Arabidopsis thaliana (Mouse-ear cress), this protein is D-glycerate 3-kinase, chloroplastic.